Consider the following 1367-residue polypeptide: Phospholipid-transporting ATPase C4F10.16c (1367 aa).

The Cytoplasmic segment spans residues 1-154 (MPSLINFDAI…PKNLWNQFKN (154 aa)). Residues 34–104 (HNGSLAHEGP…KKNEAGTESG (71 aa)) are disordered. A compositionally biased stretch (basic and acidic residues) spans 50–70 (SSRHHESQFSQEAHAEQRSRD). Positions 77-92 (FEGSCNNSDQSWTSRV) are enriched in polar residues. The chain crosses the membrane as a helical span at residues 155 to 172 (IANAFFLFVTLLQCIPLF). Residues 173–177 (CPEHL) are Lumenal-facing. Residues 178–197 (GLSFIPLSVILLTTAIKDGI) form a helical membrane-spanning segment. At 198-482 (EDYRRCVLDK…PSKRSRITRD (285 aa)) the chain is on the cytoplasmic side. Residues 483-503 (LNWTIILNFLLLFAMCLFSGV) form a helical membrane-spanning segment. Residues 504 to 531 (LRSIYSAQNNSARVFELSKNSNTAPAHG) lie on the Lumenal side of the membrane. A helical membrane pass occupies residues 532 to 552 (IISIFTSLILFQNLVPISLYI). At 553–1091 (TMDIVRSIQS…GRWDYKRMSQ (539 aa)) the chain is on the cytoplasmic side. The active-site 4-aspartylphosphate intermediate is the D600. Residues D600, K601, T602, E724, F765, S767, K770, K788, R822, T823, T902, G903, D904, R1009, and K1015 each contribute to the ATP site. D600 lines the Mg(2+) pocket. T602 provides a ligand contact to Mg(2+). D1035 is a Mg(2+) binding site. Positions 1038 and 1039 each coordinate ATP. D1039 provides a ligand contact to Mg(2+). A helical membrane pass occupies residues 1092–1112 (MISFFFYKNVIWTFILFWYQF). Residues 1113-1124 (YNEFDGNYIFDY) are Lumenal-facing. The helical transmembrane segment at 1125 to 1145 (TYVMLFNLLFTSLPVIIAGCF) threads the bilayer. Residues 1146 to 1174 (DQDVDASVSMKNPSLYQRGILGLEWNGKR) lie on the Cytoplasmic side of the membrane. A helical transmembrane segment spans residues 1175 to 1197 (FWSYMLDGIYQSLVCFGVALFVF). Over 1198 to 1212 (KFGDFVSWTGRNIEC) the chain is Lumenal. A helical transmembrane segment spans residues 1213 to 1233 (IEDIGLFISSPTIFVINIFIL). At 1234–1240 (MNQERLN) the chain is on the cytoplasmic side. The helical transmembrane segment at 1241–1261 (LISLITWMFSIGVFWIWTFIY) threads the bilayer. Residues 1262–1276 (SEVGPSYAFHKSASR) lie on the Lumenal side of the membrane. A helical membrane pass occupies residues 1277-1297 (TCQTFGFWCVTVLTIALCLLP). A 1,2-diacyl-sn-glycero-3-phospho-L-serine is bound at residue R1298. The Cytoplasmic portion of the chain corresponds to 1298-1367 (RFSYICLQKL…TSVSFDDSNK (70 aa)).

Belongs to the cation transport ATPase (P-type) (TC 3.A.3) family. Type IV subfamily. Mg(2+) serves as cofactor.

It localises to the cell membrane. It is found in the endoplasmic reticulum membrane. The catalysed reaction is ATP + H2O + phospholipidSide 1 = ADP + phosphate + phospholipidSide 2.. It carries out the reaction a 1,2-diacyl-sn-glycero-3-phosphoethanolamine(out) + ATP + H2O = a 1,2-diacyl-sn-glycero-3-phosphoethanolamine(in) + ADP + phosphate + H(+). The enzyme catalyses a 1,2-diacyl-sn-glycero-3-phosphocholine(out) + ATP + H2O = a 1,2-diacyl-sn-glycero-3-phosphocholine(in) + ADP + phosphate + H(+). It catalyses the reaction a beta-D-glucosyl-(1&lt;-&gt;1')-N-acylsphing-4-enine(out) + ATP + H2O = a beta-D-glucosyl-(1&lt;-&gt;1')-N-acylsphing-4-enine(in) + ADP + phosphate + H(+). The catalysed reaction is a 1,2-diacyl-sn-glycero-3-phospho-L-serine(out) + ATP + H2O = a 1,2-diacyl-sn-glycero-3-phospho-L-serine(in) + ADP + phosphate + H(+). In terms of biological role, catalytic component of a P4-ATPase flippase complex which catalyzes the hydrolysis of ATP coupled to the transport of glucosylceramide, phosphatidylcholine, phosphatidylethanolamine, and small amounts of phosphatidylserine from the lumenal to the cytosolic leaflet of the cell membrane and ensures the maintenance of asymmetric distribution of phospholipids. The polypeptide is Phospholipid-transporting ATPase C4F10.16c (Schizosaccharomyces pombe (strain 972 / ATCC 24843) (Fission yeast)).